A 209-amino-acid chain; its full sequence is Regulator of G-protein signaling 1 (209 aa).

Residues 85–200 (SLEKLLANQT…LKSDIYLNLL (116 aa)) enclose the RGS domain.

Interacts with GNAI1 and GNAQ. Detected in peripheral blood monocytes. Expression is relatively low in B-cells and chronic lymphocytic leukemia B-cells; however, in other types of malignant B-cell such as non-Hodgkin lymphoma and hairy cell leukemia, expression is constitutively high.

Its subcellular location is the cell membrane. It is found in the cytoplasm. It localises to the cytosol. Regulates G protein-coupled receptor signaling cascades, including signaling downstream of the N-formylpeptide chemoattractant receptors and leukotriene receptors. Inhibits B cell chemotaxis toward CXCL12. Inhibits signal transduction by increasing the GTPase activity of G protein alpha subunits thereby driving them into their inactive GDP-bound form. In Homo sapiens (Human), this protein is Regulator of G-protein signaling 1 (RGS1).